The chain runs to 178 residues: QTVQVEPPYYAGDGEYLMVDLIWTQCEPCTQCFSQDSSSFSTLPCESQYCQDLPSETCDCQYTYGYGDGSSTQGYMAXEDGSSVPNIAFGCGDNLQIDSGTTLTYLPQDAYNAVAQAFTDQINLPTVDESSSGLSTCFQEPSDGSTVQVPEISMQDGGVLNDLQNLAVSFFPTQCGAS.

D98 is a catalytic residue.

This sequence belongs to the peptidase A1 family.

It localises to the secreted. The enzyme catalyses Similar to pepsin, but also cleaves on either side of Asp and at Lys-|-Arg.. Its activity is regulated as follows. Inhibited by pepstatin and by diazoacetyl-D,L-norleucine methyl ester (DAN) in the presence of Cu(2+) ions. Functionally, extracellular proteinase found in the pitcher fluid of carnivorous plants. Digest prey for nitrogen uptake. In Nepenthes distillatoria (Pitcher plant), this protein is Aspartic proteinase nepenthesin-2.